A 430-amino-acid polypeptide reads, in one-letter code: Glial fibrillary acidic protein (430 aa).

A disordered region spans residues 1 to 31; the sequence is MERRRITSARRSYASSETMVRGHGPTRHLGT. The segment at 1–70 is head; the sequence is MERRRITSAR…KETRASERAE (70 aa). Thr-7 carries the phosphothreonine; by AURKB and ROCK1 modification. Over residues 9-18 the composition is skewed to polar residues; it reads ARRSYASSET. The residue at position 11 (Arg-11) is an Omega-N-methylarginine. A Phosphoserine modification is found at Ser-12. Arg-21 is modified (omega-N-methylarginine). The residue at position 34 (Arg-34) is a Citrulline. Ser-36 carries the post-translational modification Phosphoserine; by AURKB and ROCK1. Residue Thr-41 is modified to Phosphothreonine. The IF rod domain maps to 67 to 375; it reads ERAEMMELND…KLLEGEENRI (309 aa). A coil 1A region spans residues 71–102; that stretch reads MMELNDRFASYIEKVRFLEQQNKALAAELNQL. At Ser-80 the chain carries Phosphoserine. The interval 103-113 is linker 1; it reads RAKEPTKLADV. Residues Thr-108 and Thr-148 each carry the phosphothreonine modification. The tract at residues 114 to 212 is coil 1B; that stretch reads YQAELRELRL…EEEVRELQEQ (99 aa). Residues 213–228 form a linker 12 region; sequence LAQQQVHVEMDVAKPD. The tract at residues 229–250 is coil 2A; it reads LTAALREIRTQYEAVATSNMQE. Positions 251 to 254 are linker 2; it reads TEEW. The segment at 255 to 375 is coil 2B; sequence YRSKFADLTD…KLLEGEENRI (121 aa). Phosphoserine is present on Ser-267. The residue at position 268 (Arg-268) is a Citrulline. Ser-321 carries the post-translational modification Phosphoserine. The tail stretch occupies residues 376–430; that stretch reads TIPVQTFSNLQIRETSLDTKSVSEGHLKRNIVVKTVEMRDGEVIKESKQEHKDVM. Thr-381 carries the phosphothreonine modification. Ser-383 carries the post-translational modification Phosphoserine. Citrulline occurs at positions 404 and 414.

This sequence belongs to the intermediate filament family. As to quaternary structure, interacts with SYNM. In terms of assembly, interacts with PSEN1 (via N-terminus). Post-translationally, phosphorylated by PKN1. In terms of tissue distribution, expressed in the cortex and hippocampus. Expression decreases following acute and chronic corticosterone treatment.

It localises to the cytoplasm. Functionally, GFAP, a class-III intermediate filament, is a cell-specific marker that, during the development of the central nervous system, distinguishes astrocytes from other glial cells. This is Glial fibrillary acidic protein (Gfap) from Rattus norvegicus (Rat).